Here is a 314-residue protein sequence, read N- to C-terminus: 4-hydroxyproline 2-epimerase (314 aa).

Cys-88 serves as the catalytic Proton acceptor. Residues 89-90 (GH), His-208, and Asp-232 each bind substrate. The Proton donor role is filled by Cys-236. 237–238 (GT) lines the substrate pocket.

Belongs to the proline racemase family. In terms of assembly, homodimer.

The catalysed reaction is trans-4-hydroxy-L-proline = cis-4-hydroxy-D-proline. With respect to regulation, inhibited by iodoacetate, iodoacetamide and by high amounts (10 mM) of pyrrole-2-carboxylate (PYC). Not inhibited by PYC at 1 mM. In terms of biological role, allows intracellular utilization of 4-hydroxyproline, one of the major constituents of host collagen, by converting trans-4-hydroxy-L-proline (t4LHyp) to cis-4-hydroxy-D-proline (c4DHyp), which can be further metabolized by intracellular 4-hydroxy-D-proline oxidases. Strong B-cell mitogen. Plays an important role in the regulation of intra- and extracellular amino acid pools, allowing the bacterium to profit from host precursors and enzymatic pathways. Cannot use L-proline, trans-3-hydroxy-L-proline (t3LHyp) and pyrrolidone-5-carboxylate (P5C) as substrate. This is 4-hydroxyproline 2-epimerase from Pseudomonas aeruginosa (strain ATCC 15692 / DSM 22644 / CIP 104116 / JCM 14847 / LMG 12228 / 1C / PRS 101 / PAO1).